A 396-amino-acid polypeptide reads, in one-letter code: Obg-like ATPase 1 (396 aa).

The region spanning 23–283 (LKIGIVGLPN…MSAEEKQKYL (261 aa)) is the OBG-type G domain. Position 32 to 37 (32 to 37 (NVGKST)) interacts with ATP. The Mg(2+) site is built by S36 and T56. L231 contacts ATP. Positions 267–274 (LELKLQDM) match the Nuclear export signal motif. One can recognise a TGS domain in the interval 304 to 387 (QLEYFFTAGP…EDGDIIFFKF (84 aa)).

It belongs to the TRAFAC class OBG-HflX-like GTPase superfamily. OBG GTPase family. YchF/OLA1 subfamily. As to quaternary structure, monomer. The cofactor is Mg(2+).

The protein resides in the cytoplasm. It is found in the nucleus. Its subcellular location is the nucleolus. Hydrolyzes ATP, and can also hydrolyze GTP with lower efficiency. Has lower affinity for GTP. The polypeptide is Obg-like ATPase 1 (Gallus gallus (Chicken)).